Here is a 409-residue protein sequence, read N- to C-terminus: Lissencephaly-1 homolog (409 aa).

The LisH domain maps to 7-39 (RRERSNQAIADYLGSNGYTDALEAFRKEADMPN). Residues 54–81 (TSVIRLQKKVMELEAKLSEAEKEAIEGA) are a coiled coil. WD repeat units follow at residues 104–145 (GHRA…RTLK), 146–185 (GHTD…ECVK), 189–228 (GHDH…CVKT), 231–270 (GHRE…CKAE), 273–332 (EHEN…CLFT), 335–374 (GHDN…CMKT), and 377–409 (AHSH…WECR).

This sequence belongs to the WD repeat LIS1/nudF family.

The protein resides in the cytoplasm. It is found in the cytoskeleton. It localises to the microtubule organizing center. Its subcellular location is the centrosome. Functionally, positively regulates the activity of the minus-end directed microtubule motor protein dynein. May enhance dynein-mediated microtubule sliding by targeting dynein to the microtubule plus end. Required for several dynein- and microtubule-dependent processes. This is Lissencephaly-1 homolog from Aedes aegypti (Yellowfever mosquito).